The following is a 25-amino-acid chain: Fibrinolytic enzyme large subunit (25 aa).

One can recognise a Peptidase S1 domain in the interval 1-25; sequence VIGGTNASPGEIPWQLSQQRQSGSW. The disordered stretch occupies residues 1–25; the sequence is VIGGTNASPGEIPWQLSQQRQSGSW. Residues 15–25 show a composition bias toward polar residues; sequence QLSQQRQSGSW.

This sequence belongs to the peptidase S1 family. As to quaternary structure, heterodimer of a large and a small subunit held together by hydrophobic interactions.

Functionally, cleaves the carboxyl side of basic amino acids, small neutral amino acids, and Met residue. It is also a plasminogen activator. This Eisenia fetida (Red wiggler worm) protein is Fibrinolytic enzyme large subunit.